The chain runs to 304 residues: MATVIDRHSQPTWRDFLELTKPKVVVLMLITSLIGMLLATKAPLDGFVPWQVLIFGNLGIGLCAGAAAAVNHVVDRRIDSIMARTHKRPLAEGRVSPSMALGFALLLALAGMAVLLAFTNPLTAWLTLASLLGYAALYTGFLKRATPQNIVIGGLAGAAPPLLGWVAITGHLSAEPLLLVLIIFAWTPPHFWALCIHRKDEYAKADIPMLPVTHGERYTKLHILLYTLVLFAVSLMPFVIHMSGLVYLLCALALGARFLDWAWALYCDSRPHAAIKTFKYSIVYLFLLFMALLVDHYLPLKLLL.

Helical transmembrane passes span 24–44 (VVVLMLITSLIGMLLATKAPL), 47–67 (FVPWQVLIFGNLGIGLCAGAA), 99–119 (MALGFALLLALAGMAVLLAFT), 122–142 (LTAWLTLASLLGYAALYTGFL), 150–170 (IVIGGLAGAAPPLLGWVAITG), 176–196 (PLLLVLIIFAWTPPHFWALCI), 228–248 (LVLFAVSLMPFVIHMSGLVYL), and 280–300 (YSIVYLFLLFMALLVDHYLPL).

The protein belongs to the UbiA prenyltransferase family. Protoheme IX farnesyltransferase subfamily.

It is found in the cell inner membrane. It carries out the reaction heme b + (2E,6E)-farnesyl diphosphate + H2O = Fe(II)-heme o + diphosphate. Its pathway is porphyrin-containing compound metabolism; heme O biosynthesis; heme O from protoheme: step 1/1. Its function is as follows. Converts heme B (protoheme IX) to heme O by substitution of the vinyl group on carbon 2 of heme B porphyrin ring with a hydroxyethyl farnesyl side group. This chain is Protoheme IX farnesyltransferase 1, found in Pseudomonas aeruginosa (strain UCBPP-PA14).